Here is a 308-residue protein sequence, read N- to C-terminus: Glycine--tRNA ligase alpha subunit (308 aa).

This sequence belongs to the class-II aminoacyl-tRNA synthetase family. In terms of assembly, tetramer of two alpha and two beta subunits.

Its subcellular location is the cytoplasm. It catalyses the reaction tRNA(Gly) + glycine + ATP = glycyl-tRNA(Gly) + AMP + diphosphate. This is Glycine--tRNA ligase alpha subunit from Brucella abortus (strain 2308).